Here is a 963-residue protein sequence, read N- to C-terminus: Protein translocase subunit SecA (963 aa).

ATP-binding positions include Gln-87, 105–109 (GEGKT), and Asp-512. 2 disordered regions span residues 868–909 (GPVM…EDFT) and 924–963 (QFVGGDGSSTPQQVVAGQKVGRNDPCPCGSGKKYKKCHGS). Residues 874 to 886 (PDEEEDGDEDSVE) show a composition bias toward acidic residues. The Zn(2+) site is built by Cys-949, Cys-951, Cys-960, and His-961.

This sequence belongs to the SecA family. Monomer and homodimer. Part of the essential Sec protein translocation apparatus which comprises SecA, SecYEG and auxiliary proteins SecDF. Other proteins may also be involved. Requires Zn(2+) as cofactor.

The protein resides in the cell inner membrane. It is found in the cytoplasm. The enzyme catalyses ATP + H2O + cellular proteinSide 1 = ADP + phosphate + cellular proteinSide 2.. Part of the Sec protein translocase complex. Interacts with the SecYEG preprotein conducting channel. Has a central role in coupling the hydrolysis of ATP to the transfer of proteins into and across the cell membrane, serving as an ATP-driven molecular motor driving the stepwise translocation of polypeptide chains across the membrane. The chain is Protein translocase subunit SecA from Solibacter usitatus (strain Ellin6076).